Reading from the N-terminus, the 202-residue chain is ATP-dependent Clp protease proteolytic subunit (202 aa).

Residue Ser-106 is the Nucleophile of the active site. The active site involves His-131.

This sequence belongs to the peptidase S14 family. As to quaternary structure, fourteen ClpP subunits assemble into 2 heptameric rings which stack back to back to give a disk-like structure with a central cavity, resembling the structure of eukaryotic proteasomes.

It localises to the cytoplasm. It catalyses the reaction Hydrolysis of proteins to small peptides in the presence of ATP and magnesium. alpha-casein is the usual test substrate. In the absence of ATP, only oligopeptides shorter than five residues are hydrolyzed (such as succinyl-Leu-Tyr-|-NHMec, and Leu-Tyr-Leu-|-Tyr-Trp, in which cleavage of the -Tyr-|-Leu- and -Tyr-|-Trp bonds also occurs).. In terms of biological role, cleaves peptides in various proteins in a process that requires ATP hydrolysis. Has a chymotrypsin-like activity. Plays a major role in the degradation of misfolded proteins. The polypeptide is ATP-dependent Clp protease proteolytic subunit (Albidiferax ferrireducens (strain ATCC BAA-621 / DSM 15236 / T118) (Rhodoferax ferrireducens)).